Here is a 175-residue protein sequence, read N- to C-terminus: Large ribosomal subunit protein uL10 (175 aa).

Belongs to the universal ribosomal protein uL10 family. In terms of assembly, part of the ribosomal stalk of the 50S ribosomal subunit. The N-terminus interacts with L11 and the large rRNA to form the base of the stalk. The C-terminus forms an elongated spine to which L12 dimers bind in a sequential fashion forming a multimeric L10(L12)X complex.

In terms of biological role, forms part of the ribosomal stalk, playing a central role in the interaction of the ribosome with GTP-bound translation factors. This Xylella fastidiosa (strain 9a5c) protein is Large ribosomal subunit protein uL10 (rplJ).